A 101-amino-acid chain; its full sequence is NAD(P)H-quinone oxidoreductase subunit 4L, chloroplastic (101 aa).

A run of 3 helical transmembrane segments spans residues 2–22 (MLEHVLFLSAYLFSIGIFGLI), 32–52 (MCLELILNAVNLNLVTFSHLF), and 61–81 (IFSIFVITIAAAEAAIGLAIV).

The protein belongs to the complex I subunit 4L family. NDH is composed of at least 16 different subunits, 5 of which are encoded in the nucleus.

It is found in the plastid. It localises to the chloroplast thylakoid membrane. It catalyses the reaction a plastoquinone + NADH + (n+1) H(+)(in) = a plastoquinol + NAD(+) + n H(+)(out). It carries out the reaction a plastoquinone + NADPH + (n+1) H(+)(in) = a plastoquinol + NADP(+) + n H(+)(out). NDH shuttles electrons from NAD(P)H:plastoquinone, via FMN and iron-sulfur (Fe-S) centers, to quinones in the photosynthetic chain and possibly in a chloroplast respiratory chain. The immediate electron acceptor for the enzyme in this species is believed to be plastoquinone. Couples the redox reaction to proton translocation, and thus conserves the redox energy in a proton gradient. This Piper cenocladum (Ant piper) protein is NAD(P)H-quinone oxidoreductase subunit 4L, chloroplastic.